A 59-amino-acid chain; its full sequence is Large ribosomal subunit protein bL32 (59 aa).

The tract at residues 1–59 (MAVQQNRKTPSKRGMRRSHDSLSKPTLSTEQNTGETHRRHHISADGYYRGRKVTRGQDD) is disordered. The span at 23 to 34 (SKPTLSTEQNTG) shows a compositional bias: polar residues. The span at 49–59 (RGRKVTRGQDD) shows a compositional bias: basic residues.

It belongs to the bacterial ribosomal protein bL32 family.

The protein is Large ribosomal subunit protein bL32 of Halorhodospira halophila (strain DSM 244 / SL1) (Ectothiorhodospira halophila (strain DSM 244 / SL1)).